The following is a 334-amino-acid chain: Spermidine synthase 1 (334 aa).

The segment covering 1–16 has biased composition (basic and acidic residues); sequence MDAKETSATDLKRPRE. Positions 1-35 are disordered; the sequence is MDAKETSATDLKRPREEDDNGGAATMETENGDQKK. Positions 45 to 282 constitute a PABS domain; the sequence is PGWFSEMSPM…GVIGFMLCST (238 aa). Residue Gln76 participates in S-adenosyl 3-(methylsulfanyl)propylamine binding. Residue Tyr106 participates in putrescine binding. Residues Gln107, Asp131, Glu151, 182–183, and Asp201 contribute to the S-adenosyl 3-(methylsulfanyl)propylamine site; that span reads DG. The active-site Proton acceptor is the Asp201. Putrescine is bound by residues 201–204 and Tyr270; that span reads DSSD.

The protein belongs to the spermidine/spermine synthase family. Homotetramer and heterodimer. Component of a multiprotein complex. Interacts with SPMS and SPDSYN2.

It carries out the reaction S-adenosyl 3-(methylsulfanyl)propylamine + putrescine = S-methyl-5'-thioadenosine + spermidine + H(+). The protein operates within amine and polyamine biosynthesis; spermidine biosynthesis; spermidine from putrescine: step 1/1. The polypeptide is Spermidine synthase 1 (SPDSYN1) (Arabidopsis thaliana (Mouse-ear cress)).